The chain runs to 294 residues: NAD kinase (294 aa).

The active-site Proton acceptor is the Asp-72. NAD(+) is bound by residues 72–73 (DG), 146–147 (ND), Arg-157, Arg-174, Asp-176, 187–192 (TAYSLS), and Gln-247.

It belongs to the NAD kinase family. A divalent metal cation is required as a cofactor.

The protein localises to the cytoplasm. The enzyme catalyses NAD(+) + ATP = ADP + NADP(+) + H(+). Involved in the regulation of the intracellular balance of NAD and NADP, and is a key enzyme in the biosynthesis of NADP. Catalyzes specifically the phosphorylation on 2'-hydroxyl of the adenosine moiety of NAD to yield NADP. This is NAD kinase from Marinobacter nauticus (strain ATCC 700491 / DSM 11845 / VT8) (Marinobacter aquaeolei).